We begin with the raw amino-acid sequence, 107 residues long: UPF0473 protein LACR_0139 (107 aa).

The protein belongs to the UPF0473 family.

This Lactococcus lactis subsp. cremoris (strain SK11) protein is UPF0473 protein LACR_0139.